The chain runs to 587 residues: Lipoprotein LpqB (587 aa).

Residues 1–19 (MERLMRLTILLFLGAVLAG) form the signal peptide. Cysteine 20 carries N-palmitoyl cysteine lipidation. Cysteine 20 carries the S-diacylglycerol cysteine lipid modification.

It belongs to the LpqB lipoprotein family.

It localises to the cell membrane. In Mycobacterium bovis (strain ATCC BAA-935 / AF2122/97), this protein is Lipoprotein LpqB.